The primary structure comprises 513 residues: QWRF motif-containing protein 9 (513 aa).

Polar residues-rich tracts occupy residues 1–26 (MTAA…PSES), 43–55 (GTSS…SPKR), and 65–78 (VTPS…PQST). 3 disordered regions span residues 1–89 (MTAA…RREV), 115–144 (GTLE…LSDQ), and 184–293 (VSNR…LRVR). Residues 79–89 (PRRESLDRREV) show a composition bias toward basic and acidic residues. Composition is skewed to polar residues over residues 202–211 (ESVSSGSSNG) and 244–262 (VDSS…SPRG). The QWRF motif motif lies at 334–337 (QWQF).

This sequence belongs to the QWRF family.

This chain is QWRF motif-containing protein 9 (QWRF9), found in Arabidopsis thaliana (Mouse-ear cress).